A 95-amino-acid chain; its full sequence is Gas vesicle protein S (95 aa).

This sequence belongs to the gas vesicle GvpA family.

Its subcellular location is the gas vesicle. Functionally, probably a minor component of the gas vesicle. It is not clear what function gas vesicles perform in soil bacteria. Its function is as follows. When a minimal gvp locus (gvpA2-gvpR-gvpN-gvpF-gvpG-gvpL-gvpS-gvpK-gvpJ-gvpT-gvpU, called pNL29) is expressed in E.coli gas vesicles are made. This is Gas vesicle protein S from Priestia megaterium (Bacillus megaterium).